A 145-amino-acid chain; its full sequence is Large ribosomal subunit protein uL15 (145 aa).

Positions 1–50 (MRLNTLSPAAGSKPEKQRRGRGIGSGLGKTGGRGVKGQTSRSGGGKVRAG) are disordered. A compositionally biased stretch (gly residues) spans 22–35 (GIGSGLGKTGGRGV).

It belongs to the universal ribosomal protein uL15 family. In terms of assembly, part of the 50S ribosomal subunit.

Functionally, binds to the 23S rRNA. This is Large ribosomal subunit protein uL15 from Aeromonas salmonicida (strain A449).